The chain runs to 277 residues: Urease accessory protein UreD (277 aa).

Belongs to the UreD family. In terms of assembly, ureD, UreF and UreG form a complex that acts as a GTP-hydrolysis-dependent molecular chaperone, activating the urease apoprotein by helping to assemble the nickel containing metallocenter of UreC. The UreE protein probably delivers the nickel.

Its subcellular location is the cytoplasm. Required for maturation of urease via the functional incorporation of the urease nickel metallocenter. The sequence is that of Urease accessory protein UreD from Yersinia pestis (strain Pestoides F).